The chain runs to 732 residues: Catalase-peroxidase (732 aa).

Positions 1–26 (MADNKKSPETGGITMQIPGKGRTNRD) are disordered. The segment at residues 96 to 219 (WHSAGTYRTF…LAAVQMGLIY (124 aa)) is a cross-link (tryptophyl-tyrosyl-methioninium (Trp-Tyr) (with M-245)). Histidine 97 serves as the catalytic Proton acceptor. The segment at residues 219–245 (YVNPEGPDGNPDPVAAARDIREVFARM) is a cross-link (tryptophyl-tyrosyl-methioninium (Tyr-Met) (with W-96)). Histidine 260 is a heme b binding site. Residues 344-365 (KPKGEAGAGTVPDPHDPKKRHA) are disordered.

It belongs to the peroxidase family. Peroxidase/catalase subfamily. Homodimer or homotetramer. Heme b serves as cofactor. Post-translationally, formation of the three residue Trp-Tyr-Met cross-link is important for the catalase, but not the peroxidase activity of the enzyme.

It catalyses the reaction H2O2 + AH2 = A + 2 H2O. It carries out the reaction 2 H2O2 = O2 + 2 H2O. Its function is as follows. Bifunctional enzyme with both catalase and broad-spectrum peroxidase activity. The chain is Catalase-peroxidase from Methanospirillum hungatei JF-1 (strain ATCC 27890 / DSM 864 / NBRC 100397 / JF-1).